The chain runs to 147 residues: Large ribosomal subunit protein uL15 (147 aa).

It belongs to the universal ribosomal protein uL15 family. In terms of assembly, part of the 50S ribosomal subunit.

In terms of biological role, binds to the 23S rRNA. The protein is Large ribosomal subunit protein uL15 of Blochmanniella floridana.